The chain runs to 89 residues: cAMP-regulated phosphoprotein 21 (89 aa).

A disordered region spans residues 1-89; it reads MSEQGDLNQA…GGESLQDQTL (89 aa). Serine 2 is subject to N-acetylserine. A compositionally biased stretch (low complexity) spans 9-25; it reads QAIAEEGGTEQETATPE. Serine 33 carries the phosphoserine modification. Over residues 40-53 the composition is skewed to basic and acidic residues; it reads LELQRRLEAQNQER. The residue at position 56 (serine 56) is a Phosphoserine.

Interacts with CALM1. In terms of processing, phosphorylation at Ser-56 favors interaction with CALM1.

It is found in the cytoplasm. Functionally, may act as a competitive inhibitor of calmodulin-dependent enzymes such as calcineurin in neurons. This Pongo abelii (Sumatran orangutan) protein is cAMP-regulated phosphoprotein 21 (ARPP21).